The chain runs to 308 residues: Acetylglutamate kinase (308 aa).

Residues 86–87, Arg-108, and Asn-201 each bind substrate; that span reads GG.

Belongs to the acetylglutamate kinase family. ArgB subfamily.

The protein localises to the cytoplasm. It catalyses the reaction N-acetyl-L-glutamate + ATP = N-acetyl-L-glutamyl 5-phosphate + ADP. Its pathway is amino-acid biosynthesis; L-arginine biosynthesis; N(2)-acetyl-L-ornithine from L-glutamate: step 2/4. Its function is as follows. Catalyzes the ATP-dependent phosphorylation of N-acetyl-L-glutamate. This chain is Acetylglutamate kinase, found in Prochlorococcus marinus (strain MIT 9303).